Reading from the N-terminus, the 469-residue chain is MNPNQKIITIGSICMVVGIISLILQIGNIISIWVSHSIQTGNQNQPETCNQSIITYENNTWVNQTYVNISNTNFVAEQAVAPVALAGNSSLCPISGWAIYSKDNGIRIGSRGDVFVIREPFISCSHLECRTLFLTQGALLNDKHSNGTVKDRSPYRTLMSCPVGEAPSPYNSRFESVAWSASACHDGISWLTVGISGPDNGAVAVLKYNGIITDTIKSWRNNILRTQESECACVNGSCFTVMTDGPSNGQASYKIFKIEKGKVVKSVELNAPNYHYEECSCYPDAGEITCVCRDNWHGSNRPWVSFNQNLEYQIGYICSGVFGDNPRPNDGTGSCGPVSSNGAYGVKGFSFKYGNGVWIGRTKSTSSRSGFEMVWDPNGWTETDSSFSVKQDIVAITDWSGYSGSFVQHPELTGLDCMRPCFWVELIRGRPKENTIWTSGSSISFCGVNSDTVGWSWPDGAELPFTIDK.

Topologically, residues 1–6 are intravirion; sequence MNPNQK. A helical transmembrane segment spans residues 7–27; sequence IITIGSICMVVGIISLILQIG. Residues 11-33 are involved in apical transport and lipid raft association; sequence GSICMVVGIISLILQIGNIISIW. Residues 28–469 are Virion surface-facing; sequence NIISIWVSHS…GAELPFTIDK (442 aa). A hypervariable stalk region region spans residues 36 to 90; it reads HSIQTGNQNQPETCNQSIITYENNTWVNQTYVNISNTNFVAEQAVAPVALAGNSS. Residues Asn-50, Asn-58, Asn-63, Asn-68, and Asn-88 are each glycosylated (N-linked (GlcNAc...) asparagine; by host). Residues 91–469 form a head of neuraminidase region; the sequence is LCPISGWAIY…GAELPFTIDK (379 aa). Intrachain disulfides connect Cys-92-Cys-417, Cys-124-Cys-129, Cys-184-Cys-231, Cys-233-Cys-238, Cys-279-Cys-292, Cys-281-Cys-290, Cys-318-Cys-335, and Cys-421-Cys-446. Position 118 (Arg-118) interacts with substrate. Residue Asn-146 is glycosylated (N-linked (GlcNAc...) asparagine; by host). The Proton donor/acceptor role is filled by Asp-151. Arg-152 contacts substrate. The N-linked (GlcNAc...) asparagine; by host glycan is linked to Asn-235. 277 to 278 lines the substrate pocket; that stretch reads EE. Residue Arg-293 coordinates substrate. Positions 294, 298, and 324 each coordinate Ca(2+). Arg-368 contributes to the substrate binding site. Tyr-402 (nucleophile) is an active-site residue.

Belongs to the glycosyl hydrolase 34 family. As to quaternary structure, homotetramer. It depends on Ca(2+) as a cofactor. In terms of processing, N-glycosylated.

The protein localises to the virion membrane. The protein resides in the host apical cell membrane. The enzyme catalyses Hydrolysis of alpha-(2-&gt;3)-, alpha-(2-&gt;6)-, alpha-(2-&gt;8)- glycosidic linkages of terminal sialic acid residues in oligosaccharides, glycoproteins, glycolipids, colominic acid and synthetic substrates.. With respect to regulation, inhibited by the neuraminidase inhibitors zanamivir (Relenza) and oseltamivir (Tamiflu). These drugs interfere with the release of progeny virus from infected cells and are effective against all influenza strains. Resistance to neuraminidase inhibitors is quite rare. Catalyzes the removal of terminal sialic acid residues from viral and cellular glycoconjugates. Cleaves off the terminal sialic acids on the glycosylated HA during virus budding to facilitate virus release. Additionally helps virus spread through the circulation by further removing sialic acids from the cell surface. These cleavages prevent self-aggregation and ensure the efficient spread of the progeny virus from cell to cell. Otherwise, infection would be limited to one round of replication. Described as a receptor-destroying enzyme because it cleaves a terminal sialic acid from the cellular receptors. May facilitate viral invasion of the upper airways by cleaving the sialic acid moieties on the mucin of the airway epithelial cells. Likely to plays a role in the budding process through its association with lipid rafts during intracellular transport. May additionally display a raft-association independent effect on budding. Plays a role in the determination of host range restriction on replication and virulence. Sialidase activity in late endosome/lysosome traffic seems to enhance virus replication. In Aves, this protein is Neuraminidase.